Reading from the N-terminus, the 163-residue chain is Protein-export protein SecB (163 aa).

Belongs to the SecB family. As to quaternary structure, homotetramer, a dimer of dimers. One homotetramer interacts with 1 SecA dimer.

The protein resides in the cytoplasm. In terms of biological role, one of the proteins required for the normal export of preproteins out of the cell cytoplasm. It is a molecular chaperone that binds to a subset of precursor proteins, maintaining them in a translocation-competent state. It also specifically binds to its receptor SecA. The sequence is that of Protein-export protein SecB from Brucella canis (strain ATCC 23365 / NCTC 10854 / RM-666).